Here is a 223-residue protein sequence, read N- to C-terminus: Phosphoribosylformylglycinamidine synthase subunit PurQ (223 aa).

The region spanning 2–223 (KVAIIRFPGT…LLENFINFNF (222 aa)) is the Glutamine amidotransferase type-1 domain. Residue cysteine 84 is the Nucleophile of the active site. Active-site residues include histidine 192 and glutamate 194.

As to quaternary structure, part of the FGAM synthase complex composed of 1 PurL, 1 PurQ and 2 PurS subunits.

Its subcellular location is the cytoplasm. The enzyme catalyses N(2)-formyl-N(1)-(5-phospho-beta-D-ribosyl)glycinamide + L-glutamine + ATP + H2O = 2-formamido-N(1)-(5-O-phospho-beta-D-ribosyl)acetamidine + L-glutamate + ADP + phosphate + H(+). It catalyses the reaction L-glutamine + H2O = L-glutamate + NH4(+). The protein operates within purine metabolism; IMP biosynthesis via de novo pathway; 5-amino-1-(5-phospho-D-ribosyl)imidazole from N(2)-formyl-N(1)-(5-phospho-D-ribosyl)glycinamide: step 1/2. Functionally, part of the phosphoribosylformylglycinamidine synthase complex involved in the purines biosynthetic pathway. Catalyzes the ATP-dependent conversion of formylglycinamide ribonucleotide (FGAR) and glutamine to yield formylglycinamidine ribonucleotide (FGAM) and glutamate. The FGAM synthase complex is composed of three subunits. PurQ produces an ammonia molecule by converting glutamine to glutamate. PurL transfers the ammonia molecule to FGAR to form FGAM in an ATP-dependent manner. PurS interacts with PurQ and PurL and is thought to assist in the transfer of the ammonia molecule from PurQ to PurL. This Campylobacter jejuni subsp. jejuni serotype O:2 (strain ATCC 700819 / NCTC 11168) protein is Phosphoribosylformylglycinamidine synthase subunit PurQ.